The sequence spans 436 residues: ATP-dependent protease ATPase subunit HslU (436 aa).

ATP is bound by residues Ile-19, 61-65 (GVGKT), Asp-249, Glu-314, and Arg-386.

This sequence belongs to the ClpX chaperone family. HslU subfamily. A double ring-shaped homohexamer of HslV is capped on each side by a ring-shaped HslU homohexamer. The assembly of the HslU/HslV complex is dependent on binding of ATP.

It is found in the cytoplasm. Its function is as follows. ATPase subunit of a proteasome-like degradation complex; this subunit has chaperone activity. The binding of ATP and its subsequent hydrolysis by HslU are essential for unfolding of protein substrates subsequently hydrolyzed by HslV. HslU recognizes the N-terminal part of its protein substrates and unfolds these before they are guided to HslV for hydrolysis. The protein is ATP-dependent protease ATPase subunit HslU of Bartonella henselae (strain ATCC 49882 / DSM 28221 / CCUG 30454 / Houston 1) (Rochalimaea henselae).